The chain runs to 373 residues: P2Y purinoceptor 1 (373 aa).

The Extracellular segment spans residues 1–51 (MTEVLWPAVPNGTDAAFLAGPGSSWGNSTVASTAAVSSSFKCALTKTGFQF). N-linked (GlcNAc...) asparagine glycosylation is found at Asn-11 and Asn-27. Cystine bridges form between Cys-42–Cys-296 and Cys-124–Cys-202. Lys-46 provides a ligand contact to ADP. The chain crosses the membrane as a helical span at residues 52–74 (YYLPAVYILVFIIGFLGNSVAIW). The Cytoplasmic segment spans residues 75–87 (MFVFHMKPWSGIS). A helical membrane pass occupies residues 88 to 109 (VYMFNLALADFLYVLTLPALIF). Residues 110-125 (YYFNKTDWIFGDAMCK) are Extracellular-facing. N-linked (GlcNAc...) asparagine glycosylation is present at Asn-113. A helical membrane pass occupies residues 126 to 147 (LQRFIFHVNLYGSILFLTCISA). Residues 148–166 (HRYSGVVYPLKSLGRLKKK) lie on the Cytoplasmic side of the membrane. Residues 167–188 (NAICISVLVWLIVVVAISPILF) form a helical membrane-spanning segment. The Extracellular portion of the chain corresponds to 189–214 (YSGTGVRKNKTITCYDTTSDEYLRSY). A glycan (N-linked (GlcNAc...) asparagine) is linked at Asn-197. An ADP-binding site is contributed by 203-205 (YDT). A helical membrane pass occupies residues 215–237 (FIYSMCTTVAMFCVPLVLILGCY). Residues 238 to 260 (GLIVRALIYKDLDNSPLRRKSIY) are Cytoplasmic-facing. Residues 261 to 284 (LVIIVLTVFAVSYIPFHVMKTMNL) form a helical membrane-spanning segment. ADP contacts are provided by residues 283–287 (NLRAR), 303–306 (YATY), and Arg-310. Topologically, residues 285–303 (RARLDFQTPAMCAFNDRVY) are extracellular. A helical transmembrane segment spans residues 304 to 325 (ATYQVTRGLASLNSCVDPILYF). Over 326–373 (LAGDTFRRRLSRATRKASRRSEANLQSKSEDMTLNILPEFKQNGDTSL) the chain is Cytoplasmic.

It belongs to the G-protein coupled receptor 1 family.

It is found in the cell membrane. ATP functions as antagonist and inhibits ADP-induced mobilization of Ca(2+). The P2Y1 receptor-specific antagonists A3P5PS, A3P5P and A2P5P inhibit downstream signaling mediated by mobilization of Ca(2+) from intracellular stores, and platelet shape changes in response to extracellular ADP. Receptor for extracellular adenine nucleotides such as ADP. In platelets, binding to ADP leads to mobilization of intracellular calcium ions via activation of phospholipase C, a change in platelet shape, and ultimately platelet aggregation. The polypeptide is P2Y purinoceptor 1 (P2RY1) (Homo sapiens (Human)).